A 983-amino-acid polypeptide reads, in one-letter code: MTVENAKALFFERNLCALTPLDPERASAFLADLEARAREEELAGVVALLGRKKAADFLSAILDLSPFIREALTRQPRILDRIVSATPESALEAILDEISASGTVAGVSESELMTSLRQLKREAHVLIALCDLARIFNTETTTDRLTDLAEACTGAAVRFLLLDADAAGRINLPDRSNPEKDCGWIVLGMGKFGARELNYSSDIDLIVFIDETKPAIGDPYECVDTFSRLTRRLVRILQDRTGDGYVFRVDLRLRPDPGSTPLAIPVGAALHYYEGRGQNWERAAMIKARPVAGDRLSGKQILAELSPYVWRKYLDYAAIADVHSIKRQIHAHKGHGDIAVRGHNVKLGRGGIREIEFFVQTQQLIAGGRFPELRGNQTVPMLARLAERGWITQQARDALAQEYWFLRDVEHRIQMIADEQTHILPEDDEGFARVSHMMGYADPAEFSEIFLAALKVVEKQYAALFEQAPELGAASGNLVFTGDVDDPGTLETLSAMGYERSSDICRVIRTWHFGRYRATQSAEARERLTELTPALLKAFAETRRADESLLRFDGFLQGLPAGIQLFSLLQSNPRLLNLLVMIMSAAPRLADIITRNPHVFDGLLDPAIFSEVPTRAYLEERLRAFLGSATDFEEVLDRLRIFAAEHRFLIGIRLLTGAINGVRAGQAFSDLAELMVGRALEAVEAELQRRHGKVKGAKVALLAMGKLGSRELTAGSDVDLILLYDHDKDAEESDGEKPLAPSKYYIRLTQRLIAALSAPTAEGVLYEVDMRLRPSGNKGPVATHIEAFGKYQRNDAWTWEHMALTRARPIHGDEAFIARIKVDIEDVLAMPRDVRKLAGDVREMRELIAQEKPPRDDWDLKLKPGGIIDLEFIAQFATLAGYVKKTPRPFATEEVLANLDPFFADPAMVDGLVEAHRFYTNLSQAIRLCLNDSAGLDQFPPGMRELLCRVAGLPDIERIEYELLEHYRLVRAAFDKLVGHGAD.

Residues 1–468 (MTVENAKALF…KQYAALFEQA (468 aa)) are adenylyl removase. The tract at residues 473-983 (AASGNLVFTG…FDKLVGHGAD (511 aa)) is adenylyl transferase.

This sequence belongs to the GlnE family. Mg(2+) serves as cofactor.

It catalyses the reaction [glutamine synthetase]-O(4)-(5'-adenylyl)-L-tyrosine + phosphate = [glutamine synthetase]-L-tyrosine + ADP. The catalysed reaction is [glutamine synthetase]-L-tyrosine + ATP = [glutamine synthetase]-O(4)-(5'-adenylyl)-L-tyrosine + diphosphate. In terms of biological role, involved in the regulation of glutamine synthetase GlnA, a key enzyme in the process to assimilate ammonia. When cellular nitrogen levels are high, the C-terminal adenylyl transferase (AT) inactivates GlnA by covalent transfer of an adenylyl group from ATP to specific tyrosine residue of GlnA, thus reducing its activity. Conversely, when nitrogen levels are low, the N-terminal adenylyl removase (AR) activates GlnA by removing the adenylyl group by phosphorolysis, increasing its activity. The regulatory region of GlnE binds the signal transduction protein PII (GlnB) which indicates the nitrogen status of the cell. The chain is Bifunctional glutamine synthetase adenylyltransferase/adenylyl-removing enzyme from Brucella melitensis biotype 1 (strain ATCC 23456 / CCUG 17765 / NCTC 10094 / 16M).